A 150-amino-acid chain; its full sequence is D-aminoacyl-tRNA deacylase (150 aa).

Positions 137-138 (GP) match the Gly-cisPro motif, important for rejection of L-amino acids motif.

Belongs to the DTD family. As to quaternary structure, homodimer.

Its subcellular location is the cytoplasm. The enzyme catalyses glycyl-tRNA(Ala) + H2O = tRNA(Ala) + glycine + H(+). It catalyses the reaction a D-aminoacyl-tRNA + H2O = a tRNA + a D-alpha-amino acid + H(+). Functionally, an aminoacyl-tRNA editing enzyme that deacylates mischarged D-aminoacyl-tRNAs. Also deacylates mischarged glycyl-tRNA(Ala), protecting cells against glycine mischarging by AlaRS. Acts via tRNA-based rather than protein-based catalysis; rejects L-amino acids rather than detecting D-amino acids in the active site. By recycling D-aminoacyl-tRNA to D-amino acids and free tRNA molecules, this enzyme counteracts the toxicity associated with the formation of D-aminoacyl-tRNA entities in vivo and helps enforce protein L-homochirality. The polypeptide is D-aminoacyl-tRNA deacylase (Alkalilimnicola ehrlichii (strain ATCC BAA-1101 / DSM 17681 / MLHE-1)).